The following is a 457-amino-acid chain: Peptidyl-prolyl cis-trans isomerase FKBP5 (457 aa).

The residue at position 1 (Met-1) is an N-acetylmethionine. The disordered stretch occupies residues 1-26 (MTTDEGAKNSGESPTATVAEQGEDIT). At Ser-13 the chain carries Phosphoserine. Lys-28 carries the N6-acetyllysine modification. A PPIase FKBP-type 1 domain is found at 50-138 (GDKVYVHYKG…FFEIELLDFK (89 aa)). An N6-acetyllysine modification is found at Lys-155. The PPIase FKBP-type 2 domain occupies 165–251 (GATVEIHLEG…IYEVTLKSFE (87 aa)). TPR repeat units lie at residues 268–301 (AAIV…LEME), 317–350 (LAAF…DSAN), and 351–384 (EKGL…NPQN). The segment at 421 to 457 (AKEEANKAMGKKTSEGVTNEKGTDSSAVEEEKAEGHV) is disordered. Residue Ser-445 is modified to Phosphoserine.

As to quaternary structure, part of a heteromultimeric cytoplasmic complex with HSP90AA1, HSPA1A/HSPA1B and steroid receptors. Upon ligand binding dissociates from the complex and FKBP4 takes its place. Interacts with functionally mature heterooligomeric progesterone receptor complexes along with HSP90 and TEBP. Interacts with NR3C1. Interacts with Akt/AKT1 and PHLPP1; enhancing dephosphorylation and subsequent activation of Akt/AKT1. Interacts with IFI44L; this interaction modulates the kinase activity of IKBKB and IKBKE. Interacts with IKBKB and IKBKE. Post-translationally, acetylation impairs ability to promote interaction between Akt/AKT1 and PHLPP1. Deacetylation by SIRT7 promotes interaction between Akt/AKT1 and PHLPP1, leading to suppress Akt/AKT1 activation. In terms of processing, ubiquitinated, leading to degradation in a proteasome-dependent manner. Deubiquitinated by USP49, leading to stabilization.

It localises to the cytoplasm. The protein localises to the nucleus. It carries out the reaction [protein]-peptidylproline (omega=180) = [protein]-peptidylproline (omega=0). Inhibited by both FK506 and rapamycin. In terms of biological role, immunophilin protein with PPIase and co-chaperone activities. Component of unligated steroid receptors heterocomplexes through interaction with heat-shock protein 90 (HSP90). Plays a role in the intracellular trafficking of heterooligomeric forms of steroid hormone receptors maintaining the complex into the cytoplasm when unliganded. Acts as a regulator of Akt/AKT1 activity by promoting the interaction between Akt/AKT1 and PHLPP1, thereby enhancing dephosphorylation and subsequent activation of Akt/AKT1. Interacts with IKBKE and IKBKB which facilitates IKK complex assembly leading to increased IKBKE and IKBKB kinase activity, NF-kappaB activation, and IFN production. The protein is Peptidyl-prolyl cis-trans isomerase FKBP5 (FKBP5) of Chlorocebus aethiops (Green monkey).